Here is a 393-residue protein sequence, read N- to C-terminus: Phosphoglycerate kinase (393 aa).

Substrate is bound by residues 21–23, Arg-36, 59–62, Arg-114, and Arg-147; these read DLN and HLGR. Residues Lys-198, Glu-314, and 340 to 343 each bind ATP; that span reads GGDT.

It belongs to the phosphoglycerate kinase family. As to quaternary structure, monomer.

Its subcellular location is the cytoplasm. It carries out the reaction (2R)-3-phosphoglycerate + ATP = (2R)-3-phospho-glyceroyl phosphate + ADP. It functions in the pathway carbohydrate degradation; glycolysis; pyruvate from D-glyceraldehyde 3-phosphate: step 2/5. In Buchnera aphidicola subsp. Baizongia pistaciae (strain Bp), this protein is Phosphoglycerate kinase.